The following is a 342-amino-acid chain: Aquaporin-7 (342 aa).

Over 1 to 36 the chain is Cytoplasmic; the sequence is MVQTSRHRRSTRGSKMVSWSVMAKIQEILQKKMVRE. Position 20 is a phosphoserine (S20). The chain crosses the membrane as a helical span at residues 37–54; that stretch reads FLAEFMSTYVMMVFGLGS. The Extracellular portion of the chain corresponds to 55–67; that stretch reads VAHMVLNKKYGSY. A helical transmembrane segment spans residues 68 to 85; sequence LGVNLGFGFGVTMGVHVA. The Cytoplasmic segment spans residues 86–89; sequence GHIS. The discontinuously helical intramembrane region spans 90 to 103; that stretch reads GAHMNAAVTFANCA. Residues 94 to 96 carry the NPA 1 motif; the sequence is NAA. Topologically, residues 104-111 are cytoplasmic; sequence LGRVPWRK. A helical transmembrane segment spans residues 112–132; the sequence is FPVYVLGQFLGSFLAAATIYT. The Extracellular portion of the chain corresponds to 133–167; sequence LFYTAILHFSGGQLMVTGPVATAGIFATYLPDHMT. The helical transmembrane segment at 168-188 threads the bilayer; sequence LWRGFLNEAWLTGMLQLCLFA. Topologically, residues 189-200 are cytoplasmic; that stretch reads ITDQENNAALPG. Residues 201 to 217 form a helical membrane-spanning segment; sequence TQALVIGILVVIIGVSL. Over 218-221 the chain is Extracellular; sequence GMNT. Positions 222–235 form an intramembrane region, discontinuously helical; it reads GYAINPSRDLPPRV. Positions 226 to 228 match the NPA 2 motif; that stretch reads NPS. Over 236-253 the chain is Extracellular; it reads FTFIAGWGKEVFSEGENW. Residues 254-275 form a helical membrane-spanning segment; the sequence is WWVPVVAPLLGACLGGIIYLVF. Residues 276–342 are Cytoplasmic-facing; sequence IGSTTPREPL…LHESMALGHF (67 aa).

It belongs to the MIP/aquaporin (TC 1.A.8) family. Homotetramer; each monomer provides an independent glycerol/water pore. Two homotetramers on opposing membranes can dimerize, forming a cell-cell junction. Interacts with PLIN1. In terms of processing, phosphorylation by PKA could prevent the interaction with PLIN1.

It localises to the cell membrane. The protein resides in the cytoplasmic vesicle membrane. The protein localises to the lipid droplet. The catalysed reaction is glycerol(in) = glycerol(out). The enzyme catalyses H2O(in) = H2O(out). It carries out the reaction urea(in) = urea(out). Its activity is regulated as follows. Glycerol transport is regulated by pH, with the porin being permeable to glycerol at pH 7.4 but not at pH 5.5. Water permeability, however, is not influenced by pH. Its function is as follows. Aquaglyceroporins form homotetrameric transmembrane channels, with each monomer independently mediating glycerol and water transport across the plasma membrane along their osmotic gradient. Could also be permeable to urea. Mediates the efflux of glycerol, formed upon triglyceride hydrolysis, to avoid its accumulation in adipocytes and to make it available to other tissues. In the kidney, mediates the reabsorption of glycerol, preventing its loss in urine, again participating to energy homeostasis. In pancreatic beta cells, it also mediates the efflux of glycerol, regulating its intracellular levels. In Macaca fascicularis (Crab-eating macaque), this protein is Aquaporin-7 (AQP7).